We begin with the raw amino-acid sequence, 341 residues long: Glycerol-3-phosphate dehydrogenase [NAD(P)+] (341 aa).

Positions 14, 15, 35, and 108 each coordinate NADPH. Positions 108 and 136 each coordinate sn-glycerol 3-phosphate. NADPH is bound at residue Ala-140. Residues Lys-191, Asp-244, Ser-254, Arg-255, and Asn-256 each coordinate sn-glycerol 3-phosphate. Residue Lys-191 is the Proton acceptor of the active site. Arg-255 provides a ligand contact to NADPH. Residues Val-279 and Glu-281 each coordinate NADPH.

This sequence belongs to the NAD-dependent glycerol-3-phosphate dehydrogenase family.

Its subcellular location is the cytoplasm. The enzyme catalyses sn-glycerol 3-phosphate + NAD(+) = dihydroxyacetone phosphate + NADH + H(+). The catalysed reaction is sn-glycerol 3-phosphate + NADP(+) = dihydroxyacetone phosphate + NADPH + H(+). It functions in the pathway membrane lipid metabolism; glycerophospholipid metabolism. Catalyzes the reduction of the glycolytic intermediate dihydroxyacetone phosphate (DHAP) to sn-glycerol 3-phosphate (G3P), the key precursor for phospholipid synthesis. This chain is Glycerol-3-phosphate dehydrogenase [NAD(P)+], found in Pseudomonas putida (strain ATCC 700007 / DSM 6899 / JCM 31910 / BCRC 17059 / LMG 24140 / F1).